The primary structure comprises 2590 residues: 5-methylorsellinic acid synthase (2590 aa).

The segment at 6–255 is N-terminal acylcarrier protein transacylase domain (SAT); the sequence is LLCGSQAIQW…HNQVNRELFA (250 aa). Residues 369-784 enclose the Ketosynthase family 3 (KS3) domain; that stretch reads GDSIAIVGMG…GSNAALIVTQ (416 aa). Residues Cys-534, His-669, and His-707 each act as for beta-ketoacyl synthase activity in the active site. Residues 891–1191 form a malonyl-CoA:ACP transacylase (MAT) domain region; it reads LAFGGQTGNV…HAVNLGGPEP (301 aa). Catalysis depends on Ser-978, which acts as the For acyl/malonyl transferase activity. The tract at residues 1263–1393 is N-terminal hotdog fold; it reads PKLVSFVKYL…GTVNISSLTS (131 aa). A PKS/mFAS DH domain is found at 1263-1569; that stretch reads PKLVSFVKYL…FAKVPTASLK (307 aa). The segment at 1267–1568 is product template (PT) domain; sequence SFVKYLDSNR…RFAKVPTASL (302 aa). The Proton acceptor; for dehydratase activity role is filled by His-1297. The C-terminal hotdog fold stretch occupies residues 1421 to 1569; that stretch reads TSAIQGSLVY…FAKVPTASLK (149 aa). Asp-1481 functions as the Proton donor; for dehydratase activity in the catalytic mechanism. The tract at residues 1587 to 1612 is disordered; the sequence is LKVTEPSANVPKAQPVSTYPKPMKPA. Carrier domains lie at 1617–1691 and 1736–1812; these read AQIR…ASGT and SAQA…IPKP. O-(pantetheine 4'-phosphoryl)serine occurs at positions 1651 and 1772. Residues 1980-2212 form a methyltransferase (CMeT) domain region; it reads QHRGEHKLLN…GFRHVDWSDD (233 aa). Positions 2282–2590 are thioesterase (TE) domain; that stretch reads LMIHGGGHIM…EGYEFLLRHL (309 aa).

It carries out the reaction 3 malonyl-CoA + acetyl-CoA + S-adenosyl-L-methionine + H(+) = 5-methylorsellinate + S-adenosyl-L-homocysteine + 3 CO2 + 4 CoA. The protein operates within secondary metabolite biosynthesis. Its function is as follows. Non-reducing polyketide synthase; part of the cluster A that mediates the biosynthesis of azasperpyranones, members of the azaphilone family that exhibit anti-cancer activities. Azasperpyranones are synthesized by 2 clusters, A and B. Cluster A is responsible for the production of the polyhydric phenol moiety while the azaphilonoid scaffold is produced by the cluster B. The non-reducing polyketide synthase ATEG_03629 produces 5-methyl orsellinic acid, which is then reduced to 5-methyl orsellinic aldehyde by the NRPS-like protein ATEG_03630. 5-methyl orsellinic aldehyde is then first hydroxylated by the FAD-dependent monooxygenase ATEG_03635 and subsequently hydroxylated by the cytochrome P450 monooxygenase ATEG_03631 to produce the unstable polyhydric phenol precursor of azasperpyranones. On the other hand, the polyketide synthase ATEG_07659 is responsible for producing the 3,5-dimethyloctadienone moiety from acetyl-CoA, three malonyl-CoA, and two S-adenosyl methionines (SAM). The 3,5-dimethyloctadienone moiety is then loaded onto the SAT domain of ATEG_07661 and extended with four malonyl-CoA and one SAM, which leads to the formation of 2,4-dihydroxy-6-(5,7-dimethyl-2-oxo-trans-3-trans-5-nonadienyl)-3-methylbenzaldehyde (compound 8) after reductive release and aldol condensation. The FAD-dependent monooxygenase ATEG_07662 is the next enzyme in the biosynthesis sequence and hydroxylates the side chain at the benzylic position of compound 8. In Aspergillus nidulans, afoF, the ortholog of the FAD-dependent oxygenase ATEG_07660, is the key enzyme for the biosynthesis of asperfuranone by catalyzing the hydroxylation at C-8 of to prevent the formation of a six-membered ring hemiacetal intermediate and thus facilitating the formation of a five-membered ring to produce asperfuranone. In Aspergillus terreus, ATEG_07660 is probably not functional, which leads to the formation of the six-membered ring hemiacetal intermediate presperpyranone instead of asperfuranone. Finally, ATEG_03636 is involved in the condensation of the polyhydric phenol moiety produced by cluster A and the perasperpyranone precursor produced by cluster B, to yield azasperpyranone A. Further modifications of azasperpyranone A result in the production of derivatives, including azasperpyranone B to F. The polypeptide is 5-methylorsellinic acid synthase (Aspergillus terreus (strain NIH 2624 / FGSC A1156)).